Consider the following 900-residue polypeptide: Iodate reductase subunit IdrA (900 aa).

The segment at 1–21 is disordered; that stretch reads MSENIKQGGAGTFMQAPQDSV. 3 residues coordinate [3Fe-4S] cluster: Cys-35, Cys-38, and Cys-42.

This sequence belongs to the prokaryotic molybdopterin-containing oxidoreductase family. In terms of assembly, the iodate reductase (Idr) complex is composed of a molybdopterin-dependent iodate reductase (IdrA and IdrB subunits) and two associated peroxidases (IdrP1 and IdrP2). Requires [3Fe-4S] cluster as cofactor. Mo-bis(molybdopterin guanine dinucleotide) serves as cofactor.

The protein resides in the periplasm. Its function is as follows. Involved in iodate respiration. May accept electrons from cytochrome c551, and catalyze the reduction of iodate (IO(3)(-)) to produce the chemically unstable intermediate hypoiodous acid (HIO). This intermediate then undergoes abiotic disproportionation to yield two molecules of iodide (I(-)) and one molecule of iodate. The resultant iodate subsequently cycles back into the reductive pathway. The initial reduction of iodate may inadvertently produce low levels of incidental toxic H(2)O(2), which is detoxified by IdrP1 and IdrP2. This is Iodate reductase subunit IdrA from Denitromonas iodatirespirans.